Consider the following 275-residue polypeptide: Ceramide synthase (275 aa).

The 228-residue stretch at 34-261 folds into the TLC domain; it reads ADAVIVSARL…ICRGACRLFR (228 aa). 4 helical membrane-spanning segments follow: residues 130–150, 159–179, 194–214, and 232–252; these read FLMVLHHAAMVLVCFPLSVVW, LGCMLMAEVSTPFVCLGKILI, ALMLLSFLCCRVLLFPYLYWA, and AHVNLGAALLLAPQLYWFFLI.

In terms of tissue distribution, each isoform has a distinct expression pattern. Isoform 1 is highly expressed in brain. Isoform 2 is expressed at low levels, if any, in all analyzed tissues, with slightly higher levels in testis. Isoform 3 is expressed at very high levels in testis and, at lower levels, in white adipose tissue. In epididymal fat, isoform 3 is expressed at higher levels in obese mice compared with lean mice. By contrast, isoform 1 and 2 levels are significantly lower in obese mice compared with lean mice.

Its subcellular location is the golgi apparatus membrane. The protein resides in the endoplasmic reticulum membrane. It catalyses the reaction sphing-4-enine + octadecanoyl-CoA = N-octadecanoylsphing-4-enine + CoA + H(+). The enzyme catalyses eicosanoyl-CoA + sphing-4-enine = N-eicosanoyl-sphing-4-enine + CoA + H(+). It carries out the reaction sphing-4-enine + hexadecanoyl-CoA = N-hexadecanoylsphing-4-enine + CoA + H(+). Functionally, involved in ceramide synthesis. In vitro, isoform 3 stimulates the production of C16-, C18- and C20-ceramides, isoform 1 slightly increases the levels of C18- and C20-ceramides, while isoform 2 exhibits only minimal activity. May interfere with adipogenesis by stimulating ceramide synthesis. The protein is Ceramide synthase (Tlcd3b) of Mus musculus (Mouse).